We begin with the raw amino-acid sequence, 521 residues long: Cyclic AMP-responsive element-binding protein 3-like protein 2 (521 aa).

Over 1–378 (MEVLESGEQS…CKLAGTQTGT (378 aa)) the chain is Cytoplasmic. Positions 83–103 (YSLSEEPRTQSPFTHAATSDS) are enriched in polar residues. Residues 83-106 (YSLSEEPRTQSPFTHAATSDSFND) are disordered. A Phosphoserine modification is found at Ser93. Lys178 is covalently cross-linked (Glycyl lysine isopeptide (Lys-Gly) (interchain with G-Cter in SUMO2)). Ser191 carries the post-translational modification Phosphoserine. Residues 196-264 (SVDQLHLPPT…PHKLQGSGPL (69 aa)) are disordered. The span at 208–220 (SSHSSDSEGSLSP) shows a compositional bias: low complexity. Positions 294–357 (ALKKIRRKIK…RTLLQQLQKL (64 aa)) constitute a bZIP domain. The interval 296 to 325 (KKIRRKIKNKISAQESRRKKKEYMDSLEKK) is basic motif. The leucine-zipper stretch occupies residues 336–357 (LRKKVEVLENTNRTLLQQLQKL). The chain crosses the membrane as a helical; Signal-anchor for type II membrane protein span at residues 379 to 399 (CLMVVVLCFAVAFGSFFQGYG). Residues 400-521 (PYPSATKMAL…ELERRVNATF (122 aa)) are Lumenal-facing. An S1P recognition motif is present at residues 427–430 (RNLL). N-linked (GlcNAc...) asparagine glycosylation is found at Asn481, Asn505, and Asn518.

Belongs to the bZIP family. ATF subfamily. Binds DNA as a dimer. Upon ER stress, translocated to the Golgi apparatus, where it is processed by regulated intramembrane proteolysis (RIP) to release the cytosol-facing N-terminal transcription factor domain. The cleavage is performed sequentially by site-1 and site-2 proteases (S1P/MBTPS1 and S2P/MBTPS2). Post-translationally, N-glycosylated. In terms of processing, ubiquitinated by HRD1/SYVN1; undergoes 'Lys-48'-linked ubiquitination, followed by rapid proteasomal degradation under normal conditions. Upon ER stress, SYVN1 E3 ubiquitin-protein ligase dissociates from its substrate, ubiquitination does not occur and CREB3L2 is stabilized. As to expression, widely expressed, including in lung, bladder, ovary, testis and spleen. Highly expressed in chondrocytes.

It localises to the endoplasmic reticulum membrane. The protein resides in the nucleus. Functionally, transcription factor involved in unfolded protein response (UPR). In the absence of endoplasmic reticulum (ER) stress, inserted into ER membranes, with N-terminal DNA-binding and transcription activation domains oriented toward the cytosolic face of the membrane. In response to ER stress, transported to the Golgi, where it is cleaved in a site-specific manner by resident proteases S1P/MBTPS1 and S2P/MBTPS2. The released N-terminal cytosolic domain is translocated to the nucleus to effect transcription of specific target genes. Plays a critical role in chondrogenesis by activating the transcription of SEC23A, which promotes the transport and secretion of cartilage matrix proteins, and possibly that of ER biogenesis-related genes. In a neuroblastoma cell line, protects cells from ER stress-induced death. In vitro activates transcription of target genes via direct binding to the CRE site. This is Cyclic AMP-responsive element-binding protein 3-like protein 2 (Creb3l2) from Mus musculus (Mouse).